The following is a 90-amino-acid chain: Small ribosomal subunit protein bS16 (90 aa).

The protein belongs to the bacterial ribosomal protein bS16 family.

In Lactococcus lactis subsp. cremoris (strain MG1363), this protein is Small ribosomal subunit protein bS16.